A 423-amino-acid polypeptide reads, in one-letter code: Elongation factor 1-alpha (423 aa).

Residues 5-221 (KEHINVAFIG…DLLKPPEKLV (217 aa)) enclose the tr-type G domain. The interval 14-21 (GHVDHGKS) is G1. 14–21 (GHVDHGKS) is a binding site for GTP. Ser-21 lines the Mg(2+) pocket. The segment at 70–74 (GVTID) is G2. The segment at 91 to 94 (DCPG) is G3. Residues 91-95 (DCPGH) and 146-149 (NKMD) contribute to the GTP site. Positions 146 to 149 (NKMD) are G4. The segment at 185–187 (SAY) is G5.

The protein belongs to the TRAFAC class translation factor GTPase superfamily. Classic translation factor GTPase family. EF-Tu/EF-1A subfamily.

It localises to the cytoplasm. It catalyses the reaction GTP + H2O = GDP + phosphate + H(+). GTP hydrolase that promotes the GTP-dependent binding of aminoacyl-tRNA to the A-site of ribosomes during protein biosynthesis. This is Elongation factor 1-alpha from Archaeoglobus fulgidus (strain ATCC 49558 / DSM 4304 / JCM 9628 / NBRC 100126 / VC-16).